We begin with the raw amino-acid sequence, 175 residues long: Clathrin-associated protein AP-3 complex component APS3 (175 aa).

Belongs to the adaptor complexes small subunit family. As to quaternary structure, adaptor protein complex 3 (AP-3) is a heterotetramer composed of 2 large adaptins, a medium adaptin and a small adaptin.

Its subcellular location is the golgi apparatus. It is found in the cytoplasmic vesicle membrane. Part of the AP-3 complex, an adapter-related complex which is not clathrin-associated. The complex is associated with the Golgi region as well as more peripheral structures. It facilitates the budding of vesicles from the Golgi membrane. Involved in vacuolar trafficking and contributes to hyphal growth and pathogenesis. In Candida albicans (strain SC5314 / ATCC MYA-2876) (Yeast), this protein is Clathrin-associated protein AP-3 complex component APS3 (APS3).